Consider the following 712-residue polypeptide: Polyribonucleotide nucleotidyltransferase (712 aa).

Residues Asp-487 and Asp-493 each contribute to the Mg(2+) site. One can recognise a KH domain in the interval 554 to 613 (PRIEVMNIPVDKIREVIGSGGKVIREIVEKTGAKINIEDDGTVKIASSSGKEIEAARKWI). In terms of domain architecture, S1 motif spans 623 to 691 (GQIYEGTVVK…ERGKVRLSMK (69 aa)).

It belongs to the polyribonucleotide nucleotidyltransferase family. It depends on Mg(2+) as a cofactor.

It localises to the cytoplasm. It carries out the reaction RNA(n+1) + phosphate = RNA(n) + a ribonucleoside 5'-diphosphate. Its function is as follows. Involved in mRNA degradation. Catalyzes the phosphorolysis of single-stranded polyribonucleotides processively in the 3'- to 5'-direction. The polypeptide is Polyribonucleotide nucleotidyltransferase (Rhizobium leguminosarum bv. trifolii (strain WSM2304)).